The primary structure comprises 202 residues: Snake venom metalloproteinase TM-1 (202 aa).

Residue Gln1 is modified to Pyrrolidone carboxylic acid. One can recognise a Peptidase M12B domain in the interval 7–202 (RYVMLAIVAD…TNPQCILNAP (196 aa)). 3 disulfide bridges follow: Cys118–Cys197, Cys159–Cys181, and Cys161–Cys164. Zn(2+) is bound at residue His143. Glu144 is a catalytic residue. His147 and His153 together coordinate Zn(2+).

Belongs to the venom metalloproteinase (M12B) family. P-I subfamily. In terms of assembly, monomer. Zn(2+) serves as cofactor. In terms of processing, the N-terminus is blocked. Not glycosylated. In terms of tissue distribution, expressed by the venom gland.

It is found in the secreted. Inhibited by EDTA and 1,10-phenanthroline. Is also inhibited by endogenous tripeptide inhibitors pyroGlu-Asn-Trp, pyroGlu-Gln-Trp, and pyroGlu-Lys-Trp. Functionally, potent fibrinogenolytic protease which cleaves mainly the Aalpha (FGA) and Bbeta (FGB) chains of fibrinogen and slightly the gamma chain (FGG). Shows preference for substrates having a moderate-size and hydrophobic residue at the P1' position. Preferentially cleaves Ala-|-Leu and Tyr-|-Leu bonds. Is more susceptible to tripeptide inhibitors than TM-3 (AC O57413). The sequence is that of Snake venom metalloproteinase TM-1 from Protobothrops mucrosquamatus (Taiwan habu).